The chain runs to 460 residues: Vitamin K-dependent protein C (460 aa).

The N-terminal stretch at 1–18 is a signal peptide; it reads MWQFRVFLLLMSTWGISS. A propeptide spanning residues 19 to 41 is cleaved from the precursor; that stretch reads IPAHPDPVFSSSEHAHQVLRVRR. Residues 42 to 87 form the Gla domain; the sequence is ANSFLEEMRPGSLERECMEEICDFEEAQEIFQNVEDTLAFWIKYFD. 4-carboxyglutamate occurs at positions 47, 48, 55, 57, 60, 61, 66, 67, 70, and 76. Cys-58 and Cys-63 form a disulfide bridge. 9 disulfide bridges follow: Cys-91–Cys-110, Cys-100–Cys-105, Cys-104–Cys-119, Cys-121–Cys-130, Cys-139–Cys-150, Cys-146–Cys-159, Cys-161–Cys-174, Cys-182–Cys-319, and Cys-238–Cys-254. EGF-like domains follow at residues 96 to 131 and 135 to 175; these read LDHQCDSPCCGHGTCIDGIGSFSCSCDKGWEGKFCQ and RFQD…MRCK. Asp-112 is subject to (3R)-3-hydroxyaspartate. The region spanning 213-449 is the Peptidase S1 domain; it reads VNGTLTKQGD…YLKWIHSYIG (237 aa). Asn-214 is a glycosylation site (N-linked (GlcNAc...) asparagine). Residue His-253 is the Charge relay system of the active site. A glycan (N-linked (GlcNAc...) asparagine) is linked at Asn-290. The active-site Charge relay system is Asp-299. Asn-354 is a glycosylation site (N-linked (GlcNAc...) asparagine). Intrachain disulfides connect Cys-372–Cys-386 and Cys-397–Cys-425. The Charge relay system role is filled by Ser-401.

The protein belongs to the peptidase S1 family. As to quaternary structure, synthesized as a single chain precursor, which is cleaved into a light chain and a heavy chain held together by a disulfide bond. The enzyme is then activated by thrombin, which cleaves a tetradecapeptide from the amino end of the heavy chain; this reaction, which occurs at the surface of endothelial cells, is strongly promoted by thrombomodulin. The vitamin K-dependent, enzymatic carboxylation of some Glu residues allows the modified protein to bind calcium. In terms of processing, the iron and 2-oxoglutarate dependent 3-hydroxylation of aspartate and asparagine is (R) stereospecific within EGF domains. Plasma; synthesized in the liver.

The protein resides in the secreted. The protein localises to the golgi apparatus. It localises to the endoplasmic reticulum. The enzyme catalyses Degradation of blood coagulation factors Va and VIIIa.. Protein C is a vitamin K-dependent serine protease that regulates blood coagulation by inactivating factors Va and VIIIa in the presence of calcium ions and phospholipids. Exerts a protective effect on the endothelial cell barrier function. The chain is Vitamin K-dependent protein C (Proc) from Mus musculus (Mouse).